Reading from the N-terminus, the 494-residue chain is Integrin beta-like protein 1 (494 aa).

The first 23 residues, 1–23 (MRPPGFRNFLLLASSLLFAGLSA), serve as a signal peptide directing secretion. Intrachain disulfides connect C40–C71, C51–C69, C63–C74, C76–C89, C91–C112, C96–C110, C104–C115, C117–C126, C132–C159, C143–C157, C151–C162, C164–C178, C180–C202, C185–C200, C194–C205, C207–C216, C220–C247, C231–C245, C239–C250, C252–C269, C271–C296, C276–C294, C288–C299, C301–C310, C316–C343, C327–C341, C335–C346, C348–C361, C363–C384, C368–C382, C376–C387, C389–C398, C404–C431, C415–C429, C423–C434, C436–C448, C450–C471, C455–C469, C463–C474, and C476–C485. I-EGF domains follow at residues 40 to 90 (CRLS…PLCE), 91 to 127 (CHEWVCETYDGSTCAGHGKCDCGKCKCDQGWYGDACQ), 132 to 179 (CDLT…KFCE), 180 to 217 (CDDRECIDDETEEICGGHGKCYCGNCYCKAGWHGDKCE), 220 to 270 (CDIT…DTCE), 271 to 311 (CDER…KKCE), 316 to 362 (CTLS…KTCE), 363 to 399 (CDDRRCEDLDGVVCGGHGTCSCGRCVCERGWFGKLCQ), 404 to 449 (CNMT…EFCD), and 450 to 486 (CDDRDCDKHDGLICTGNGICSCGNCECWDGWNGNACE). An I repeat occupies 51–95 (CRAPGQPPGAALCHGRGRCDCGVCICHVTEPGMFFGPLCECHEWV). Residues 51–494 (CRAPGQPPGA…CEIWLGSEYP (444 aa)) are cysteine-rich tandem repeats. The II repeat unit spans residues 96-142 (CETYDGSTCAGHGKCDCGKCKCDQGWYGDACQYPTNCDLTKKKSNQM). An III repeat occupies 143–184 (CKNSQDIICSNAGTCHCGRCKCDNSDGSGLVYGKFCECDDRE). Residues 185 to 230 (CIDDETEEICGGHGKCYCGNCYCKAGWHGDKCEFQCDITPWESKRR) form an IV repeat. A V repeat occupies 231–275 (CTSPDGKICSNRGTCVCGECTCHDVDPTGDWGDIHGDTCECDERD). The VI repeat unit spans residues 276–326 (CRAVYDRYSDDFCSGHGQCNCGRCDCKAGWYGKKCEHPQSCTLSAEESIRK). Residues 327–367 (CQGSSDLPCSGRGKCECGKCTCYPPGDRRVYGKTCECDDRR) form a VII repeat. One copy of the VIII repeat lies at 368 to 414 (CEDLDGVVCGGHGTCSCGRCVCERGWFGKLCQHPRKCNMTEEQSKNL). N405 is a glycosylation site (N-linked (GlcNAc...) asparagine). One copy of the IX repeat lies at 415 to 454 (CESADGILCSGKGSCHCGKCICSAEEWYISGEFCDCDDRD). The stretch at 455–494 (CDKHDGLICTGNGICSCGNCECWDGWNGNACEIWLGSEYP) is one X repeat.

Widely expressed in many tissues, but readily detectable only in aorta.

The protein resides in the secreted. This chain is Integrin beta-like protein 1 (ITGBL1), found in Homo sapiens (Human).